Consider the following 863-residue polypeptide: Paramyosin (863 aa).

Residues 1–18 (MSESHVKISRTIIRGTSP) form a nonhelical region region. Residues 19 to 836 (STVRLESRVR…ERTITIKRTI (818 aa)) are a coiled coil. A nonhelical region region spans residues 837–863 (GGPGSRAVSVVREINSVSRGNRATSIM).

It belongs to the paramyosin family. Homodimer.

It is found in the cytoplasm. The protein localises to the myofibril. Functionally, paramyosin is a major structural component of many thick filaments isolated from invertebrate muscles. The chain is Paramyosin (PMY) from Taenia saginata (Beef tapeworm).